The following is a 348-amino-acid chain: Ion-translocating oxidoreductase complex subunit D (348 aa).

A run of 5 helical transmembrane segments spans residues 15-35 (LTAKFMLWVMVAMLPALGMQA), 36-56 (YFFGYGVFIQVFIALLLAVAI), 67-87 (LTAFYVADLSGVLTALILAIS), 88-108 (IPPYAPYWIIVIGIIVALLLA), and 125-145 (VAYALLLVSFPVQMTGWLVPI). T186 carries the FMN phosphoryl threonine modification. Helical transmembrane passes span 212 to 232 (LFANGWWQINLAFLAGGLLLI), 241 to 261 (IPAAMLGMFALLSGLTDLLLP), 265 to 285 (LNVVSQLFSGAMMFGAFFIAT), 298 to 318 (LIFGGLIGLFVYLIRYYGNYP), and 320 to 340 (AVAFSVLLANICVPLIDHYTQ).

Belongs to the NqrB/RnfD family. The complex is composed of six subunits: RnfA, RnfB, RnfC, RnfD, RnfE and RnfG. FMN serves as cofactor.

The protein localises to the cell inner membrane. Part of a membrane-bound complex that couples electron transfer with translocation of ions across the membrane. The sequence is that of Ion-translocating oxidoreductase complex subunit D from Actinobacillus pleuropneumoniae serotype 3 (strain JL03).